The sequence spans 154 residues: MLCPFCNHGELKVIDSRNAPESNAIKRRRECLRCSQRFTTFETVELTVQVLKRDGRYENFQESKLVNGLKAASSHTRIGQEQVQAIASNIKQDLLGKQNREISTKEIGELVMKYLKKADMIAYIRFACVYRRFKDVGELMEVLLSATPDGEKQT.

A zinc finger spans residues 3–34; that stretch reads CPFCNHGELKVIDSRNAPESNAIKRRRECLRC. The ATP-cone domain maps to 48 to 138; sequence VQVLKRDGRY…VYRRFKDVGE (91 aa).

It belongs to the NrdR family. It depends on Zn(2+) as a cofactor.

Its function is as follows. Negatively regulates transcription of bacterial ribonucleotide reductase nrd genes and operons by binding to NrdR-boxes. The protein is Transcriptional repressor NrdR of Chlamydia trachomatis serovar L2 (strain ATCC VR-902B / DSM 19102 / 434/Bu).